The chain runs to 557 residues: NADP-dependent malic enzyme (557 aa).

The Proton donor role is filled by tyrosine 91. Arginine 144 serves as a coordination point for NADP(+). Residues arginine 144 and lysine 162 each coordinate substrate. Lysine 162 (proton acceptor) is an active-site residue. Glutamate 234 and aspartate 235 together coordinate Mn(2+). An NADP(+)-binding site is contributed by asparagine 238. Residue aspartate 258 participates in Mn(2+) binding. NADP(+) is bound by residues 291-294, serine 325, asparagine 397, and asparagine 443; that span reads AGEA. Asparagine 443 is a substrate binding site.

The protein belongs to the malic enzymes family. As to quaternary structure, homotetramer. The cofactor is Mg(2+). Mn(2+) serves as cofactor. The N-terminus is blocked.

The protein localises to the cytoplasm. It catalyses the reaction (S)-malate + NADP(+) = pyruvate + CO2 + NADPH. The catalysed reaction is oxaloacetate + H(+) = pyruvate + CO2. This chain is NADP-dependent malic enzyme (ME1), found in Columba livia (Rock dove).